A 647-amino-acid chain; its full sequence is Threonine--tRNA ligase (647 aa).

In terms of domain architecture, TGS spans 1 to 61 (MIKITFPDGA…EEDGSIEIVT (61 aa)). The segment at 240–538 (DHRKLGKELD…LIETYKGAFP (299 aa)) is catalytic. Cys334, His385, and His515 together coordinate Zn(2+).

This sequence belongs to the class-II aminoacyl-tRNA synthetase family. As to quaternary structure, homodimer. It depends on Zn(2+) as a cofactor.

It is found in the cytoplasm. It carries out the reaction tRNA(Thr) + L-threonine + ATP = L-threonyl-tRNA(Thr) + AMP + diphosphate + H(+). Functionally, catalyzes the attachment of threonine to tRNA(Thr) in a two-step reaction: L-threonine is first activated by ATP to form Thr-AMP and then transferred to the acceptor end of tRNA(Thr). Also edits incorrectly charged L-seryl-tRNA(Thr). The protein is Threonine--tRNA ligase of Streptococcus pyogenes serotype M2 (strain MGAS10270).